A 544-amino-acid polypeptide reads, in one-letter code: Chaperonin GroEL 2 (544 aa).

Residues 29-32 (TLGP), 86-90 (DGTTT), Gly-413, 479-481 (NAA), and Asp-495 each bind ATP.

It belongs to the chaperonin (HSP60) family. As to quaternary structure, forms a cylinder of 14 subunits composed of two heptameric rings stacked back-to-back. Interacts with the co-chaperonin GroES.

It is found in the cytoplasm. It catalyses the reaction ATP + H2O + a folded polypeptide = ADP + phosphate + an unfolded polypeptide.. In terms of biological role, together with its co-chaperonin GroES, plays an essential role in assisting protein folding. The GroEL-GroES system forms a nano-cage that allows encapsulation of the non-native substrate proteins and provides a physical environment optimized to promote and accelerate protein folding. This Prochlorococcus marinus (strain MIT 9515) protein is Chaperonin GroEL 2.